The primary structure comprises 279 residues: Probable endonuclease 4 (279 aa).

H66, H106, E142, D175, H178, H212, D225, H227, and E257 together coordinate Zn(2+).

The protein belongs to the AP endonuclease 2 family. The cofactor is Zn(2+).

The enzyme catalyses Endonucleolytic cleavage to 5'-phosphooligonucleotide end-products.. Functionally, endonuclease IV plays a role in DNA repair. It cleaves phosphodiester bonds at apurinic or apyrimidinic (AP) sites, generating a 3'-hydroxyl group and a 5'-terminal sugar phosphate. The protein is Probable endonuclease 4 of Moorella thermoacetica (strain ATCC 39073 / JCM 9320).